A 199-amino-acid chain; its full sequence is Fe/S biogenesis protein NfuA (199 aa).

[4Fe-4S] cluster-binding residues include C151 and C154.

This sequence belongs to the NfuA family. In terms of assembly, homodimer. [4Fe-4S] cluster serves as cofactor.

Functionally, involved in iron-sulfur cluster biogenesis. Binds a 4Fe-4S cluster, can transfer this cluster to apoproteins, and thereby intervenes in the maturation of Fe/S proteins. Could also act as a scaffold/chaperone for damaged Fe/S proteins. The polypeptide is Fe/S biogenesis protein NfuA (Xylella fastidiosa (strain M23)).